A 248-amino-acid chain; its full sequence is tRNA uridine(34) hydroxylase (248 aa).

One can recognise a Rhodanese domain in the interval 127-221 (RGRPLVLLDT…YFEEVGGEGY (95 aa)). Catalysis depends on Cys181, which acts as the Cysteine persulfide intermediate.

This sequence belongs to the TrhO family.

It carries out the reaction uridine(34) in tRNA + AH2 + O2 = 5-hydroxyuridine(34) in tRNA + A + H2O. Its function is as follows. Catalyzes oxygen-dependent 5-hydroxyuridine (ho5U) modification at position 34 in tRNAs. The chain is tRNA uridine(34) hydroxylase from Xanthomonas axonopodis pv. citri (strain 306).